Here is a 260-residue protein sequence, read N- to C-terminus: Large ribosomal subunit protein uL30 (260 aa).

Position 1 is an N-acetylmethionine (Met1). 5 tandem repeats follow at residues 7-18 (KKKKVAAALGTL), 19-30 (KKKKVPAVPETL), 31-42 (KKKRRNFAELKV), 43-54 (KRLRKKFALKTL), and 55-66 (RKARRKLIYEKA). Residues 7–66 (KKKKVAAALGTLKKKKVPAVPETLKKKRRNFAELKVKRLRKKFALKTLRKARRKLIYEKA) are 5 X 12 AA tandem repeats. Phosphothreonine is present on Thr29. Lys136 carries the post-translational modification N6-acetyllysine. An N6-succinyllysine modification is found at Lys139. Tyr151 carries the phosphotyrosine modification.

This sequence belongs to the universal ribosomal protein uL30 family. Component of the large ribosomal subunit. Homodimer. Interacts with DHX33.

It localises to the cytoplasm. Functionally, component of the large ribosomal subunit. The ribosome is a large ribonucleoprotein complex responsible for the synthesis of proteins in the cell. Binds to G-rich structures in 28S rRNA and in mRNAs. Plays a regulatory role in the translation apparatus; inhibits cell-free translation of mRNAs. The chain is Large ribosomal subunit protein uL30 (Rpl7) from Rattus norvegicus (Rat).